Reading from the N-terminus, the 393-residue chain is Putative F-box protein At1g55070 (393 aa).

The region spanning 29–74 (GEYFDRIPADLVIKILSKLSAKSMAKCRCVCKLLSSIIRQPNYNQL) is the F-box domain.

This is Putative F-box protein At1g55070 from Arabidopsis thaliana (Mouse-ear cress).